Reading from the N-terminus, the 245-residue chain is Dof zinc finger protein DOF3.2 (245 aa).

Over residues 15–26 the composition is skewed to polar residues; that stretch reads SCSTQDYQNQKK. Residues 15 to 41 form a disordered region; the sequence is SCSTQDYQNQKKPLSATRPAPPEQSLR. The Dof-type zinc-finger motif lies at 40-94; that stretch reads LRCPRCDSTNTKFCYYNNYSLSQPRYFCKSCRRYWTKGGILRNIPIGGAYRKHKR. Zn(2+)-binding residues include Cys42, Cys45, Cys67, and Cys70. The segment at 91-118 is disordered; it reads KHKRSSSATKSLRTTPEPTMTHDGKSFP. Polar residues predominate over residues 96-108; sequence SSATKSLRTTPEP.

In terms of assembly, interacts with TCP14. In terms of tissue distribution, the PEAR proteins (e.g. DOF2.4, DOF5.1, DOF3.2, DOF1.1, DOF5.6 and DOF5.3) form a short-range concentration gradient that peaks at protophloem sieve elements (PSE).

The protein resides in the nucleus. Its function is as follows. Transcription factor that negatively affects seed germination and opposes TCP14 function in the regulation of a specific set of abscisic acid-related genes. The PEAR proteins (e.g. DOF2.4, DOF5.1, DOF3.2, DOF1.1, DOF5.6 and DOF5.3) activate gene expression that promotes radial growth of protophloem sieve elements. The sequence is that of Dof zinc finger protein DOF3.2 from Arabidopsis thaliana (Mouse-ear cress).